Here is a 185-residue protein sequence, read N- to C-terminus: MINEIKKDAQERMEKSVEALKNNLLKVRTGRAHPSLLSGISVEYYGAKTPLNQVANVVAEDSRTLAITVFDKELAGLVEKAIMMSDLGLNPMSAGTVIRVPLPPLTEERRKDLVKIVRGEAENGRVAVRNIRRDANGDVKALLKEKEISEDDDRRAQDEIQKLTDAAVKSIDEVLAVKEKELMEV.

This sequence belongs to the RRF family.

Its subcellular location is the cytoplasm. Responsible for the release of ribosomes from messenger RNA at the termination of protein biosynthesis. May increase the efficiency of translation by recycling ribosomes from one round of translation to another. The chain is Ribosome-recycling factor from Aliivibrio fischeri (strain MJ11) (Vibrio fischeri).